Here is a 582-residue protein sequence, read N- to C-terminus: Methionine--tRNA ligase (582 aa).

Positions 24-34 (PYIYAVPHLGN) match the 'HIGH' region motif. Positions 156, 159, 169, and 172 each coordinate Zn(2+). The short motif at 346–350 (KFSKS) is the 'KMSKS' region element. K349 provides a ligand contact to ATP.

This sequence belongs to the class-I aminoacyl-tRNA synthetase family. MetG type 1 subfamily. Zn(2+) is required as a cofactor.

Its subcellular location is the cytoplasm. The enzyme catalyses tRNA(Met) + L-methionine + ATP = L-methionyl-tRNA(Met) + AMP + diphosphate. In terms of biological role, is required not only for elongation of protein synthesis but also for the initiation of all mRNA translation through initiator tRNA(fMet) aminoacylation. The chain is Methionine--tRNA ligase from Caldivirga maquilingensis (strain ATCC 700844 / DSM 13496 / JCM 10307 / IC-167).